The primary structure comprises 184 residues: Protein Syd (184 aa).

The protein belongs to the Syd family.

It is found in the cell inner membrane. Interacts with the SecY protein in vivo. May bind preferentially to an uncomplexed state of SecY, thus functioning either as a chelating agent for excess SecY in the cell or as a regulatory factor that negatively controls the translocase function. The sequence is that of Protein Syd from Photorhabdus laumondii subsp. laumondii (strain DSM 15139 / CIP 105565 / TT01) (Photorhabdus luminescens subsp. laumondii).